Consider the following 120-residue polypeptide: Large ribosomal subunit protein bL12 (120 aa).

This sequence belongs to the bacterial ribosomal protein bL12 family. As to quaternary structure, homodimer. Part of the ribosomal stalk of the 50S ribosomal subunit. Forms a multimeric L10(L12)X complex, where L10 forms an elongated spine to which 2 to 4 L12 dimers bind in a sequential fashion. Binds GTP-bound translation factors.

In terms of biological role, forms part of the ribosomal stalk which helps the ribosome interact with GTP-bound translation factors. Is thus essential for accurate translation. The polypeptide is Large ribosomal subunit protein bL12 (Lactobacillus acidophilus (strain ATCC 700396 / NCK56 / N2 / NCFM)).